We begin with the raw amino-acid sequence, 365 residues long: Flagellar P-ring protein (365 aa).

A signal peptide spans 1–19 (MIKFLSALILLLVTTAAQA).

The protein belongs to the FlgI family. In terms of assembly, the basal body constitutes a major portion of the flagellar organelle and consists of four rings (L,P,S, and M) mounted on a central rod.

The protein resides in the periplasm. The protein localises to the bacterial flagellum basal body. In terms of biological role, assembles around the rod to form the L-ring and probably protects the motor/basal body from shearing forces during rotation. This is Flagellar P-ring protein from Escherichia coli O9:H4 (strain HS).